Consider the following 349-residue polypeptide: Sphingomyelinase D (349 aa).

The first 18 residues, 1–18 (MLLSSLISLALLSSQVVA), serve as a signal peptide directing secretion. Residue His52 is part of the active site. Glu72, Asp74, and Asp123 together coordinate Mg(2+). The short motif at 310 to 317 (ATNDNNPW) is the SMD-tail element.

The protein belongs to the sphingomyelinase D/phospholipase D family. Mg(2+) is required as a cofactor.

It is found in the secreted. The catalysed reaction is a sphingomyelin + H2O = an N-acylsphing-4-enine 1-phosphate + choline + H(+). In terms of biological role, catalyzes the hydrolysis of sphingomyelin. Sphingomyelinases D are produced by some spider in their venoms, but also by arthropods such as ticks, or pathogenic bacteria and fungi. They might play a role in pathogenicity through different mechanisms, such as membrane destabilization and host cell penetration, but also pulmonary inflammation and cutaneous lesions. The polypeptide is Sphingomyelinase D (Uncinocarpus reesii (strain UAMH 1704)).